The chain runs to 212 residues: Glycerol-3-phosphate acyltransferase (212 aa).

5 helical membrane passes run 3-23, 69-89, 110-130, 143-163, and 165-185; these read LILL…LWIG, LLPM…FFAI, AGIL…IFFF, VIAA…HFLL, and DYDF…IIRH.

The protein belongs to the PlsY family. Probably interacts with PlsX.

Its subcellular location is the cell membrane. The catalysed reaction is an acyl phosphate + sn-glycerol 3-phosphate = a 1-acyl-sn-glycero-3-phosphate + phosphate. It participates in lipid metabolism; phospholipid metabolism. Functionally, catalyzes the transfer of an acyl group from acyl-phosphate (acyl-PO(4)) to glycerol-3-phosphate (G3P) to form lysophosphatidic acid (LPA). This enzyme utilizes acyl-phosphate as fatty acyl donor, but not acyl-CoA or acyl-ACP. The protein is Glycerol-3-phosphate acyltransferase of Streptococcus mutans serotype c (strain ATCC 700610 / UA159).